Consider the following 40-residue polypeptide: Thioredoxin (40 aa).

A disulfide bridge connects residues C29 and C32.

Belongs to the thioredoxin family.

Participates in various redox reactions through the reversible oxidation of its active center dithiol to a disulfide and catalyzes dithiol-disulfide exchange reactions. This Clostridium sporogenes protein is Thioredoxin (trxA).